Consider the following 373-residue polypeptide: Protein MGF 360-6L (373 aa).

The protein belongs to the asfivirus MGF 360 family.

In terms of biological role, plays a role in virus cell tropism, and may be required for efficient virus replication in macrophages. This Ornithodoros (relapsing fever ticks) protein is Protein MGF 360-6L.